A 470-amino-acid chain; its full sequence is Metalloreductase STEAP4 (470 aa).

Residues 27 to 30, 49 to 50, Tyr67, 81 to 85, Asn106, and Ala139 contribute to the NADP(+) site; these read TGDF, SR, and MHREH. FAD-binding residues include Trp140 and Asp148. Arg171 contacts NADP(+). The next 2 helical transmembrane spans lie at 202 to 224 and 236 to 256; these read FPFY…REVI and YRLA…ILLA. Position 217 (Tyr217) interacts with Fe(3+). A Ferric oxidoreductase domain is found at 247–395; that stretch reads FPITALILLA…LGYLTLVLCT (149 aa). FAD-binding residues include Gln269 and Arg290. A run of 2 helical transmembrane segments spans residues 293 to 313 and 342 to 362; these read LGLV…VIPI and AWIN…FLLL. Heme b is bound at residue His304. Tyr307 contributes to the Fe(3+) binding site. Residues Ser366 and Gln383 each coordinate FAD. Helical transmembrane passes span 381–401 and 419–439; these read FVQS…TLVY and AYIL…ILIM. His397 provides a ligand contact to heme b.

The protein belongs to the STEAP family. Homotrimer. Interacts with PTK2/FAK1; the interaction may regulate PTK2 phosphorylation. It depends on FAD as a cofactor. Requires heme b as cofactor. Expressed in white and brown adipose tissues cells, as well as in muscle and liver cells. Detected in joints and spleens of arthritic mice.

The protein resides in the cell membrane. It is found in the golgi apparatus membrane. It localises to the early endosome membrane. It catalyses the reaction 2 Fe(2+) + NADP(+) + H(+) = 2 Fe(3+) + NADPH. The enzyme catalyses 2 Cu(+) + NADP(+) + H(+) = 2 Cu(2+) + NADPH. Integral membrane protein that functions as a NADPH-dependent ferric-chelate reductase, using NADPH from one side of the membrane to reduce a Fe(3+) chelate that is bound on the other side of the membrane. Mediates sequential transmembrane electron transfer from NADPH to FAD and onto heme, and finally to the Fe(3+) chelate. Can also reduce Cu(2+) to Cu(1+). Plays a role in systemic metabolic homeostasis, integrating inflammatory and metabolic responses. Associated with obesity and insulin-resistance. Involved in inflammatory arthritis, through the regulation of inflammatory cytokines. Inhibits anchorage-independent cell proliferation. The sequence is that of Metalloreductase STEAP4 (Steap4) from Mus musculus (Mouse).